We begin with the raw amino-acid sequence, 439 residues long: UPF0229 protein Nham_0975 (439 aa).

The tract at residues 39-106 (RSGRISDADG…AGTPDPSMKD (68 aa)) is disordered. Positions 58–76 (STDEPRFEAAKDSGRREHV) are enriched in basic and acidic residues.

This sequence belongs to the UPF0229 family.

The sequence is that of UPF0229 protein Nham_0975 from Nitrobacter hamburgensis (strain DSM 10229 / NCIMB 13809 / X14).